Reading from the N-terminus, the 139-residue chain is Large ribosomal subunit protein uL16 (139 aa).

Residues 1 to 23 are disordered; that stretch reads MLQPARTKYRKMHKGRMPGSAHR. The span at 7–16 shows a compositional bias: basic residues; sequence TKYRKMHKGR.

It belongs to the universal ribosomal protein uL16 family. In terms of assembly, part of the 50S ribosomal subunit.

Its function is as follows. Binds 23S rRNA and is also seen to make contacts with the A and possibly P site tRNAs. The protein is Large ribosomal subunit protein uL16 of Myxococcus xanthus (strain DK1622).